The chain runs to 3655 residues: NuA4 acetyltransferase complex subunit Tra2 (3655 aa).

Residues 8-2459 are HEAT; it reads SLSSSIELLK…REYHIRLLGK (2452 aa). HEAT repeat units lie at residues 46–89, 94–131, 149–188, 230–268, 300–338, 374–412, 438–475, 606–643, 644–683, 735–772, 783–820, 828–867, 1100–1141, 1147–1184, 1193–1230, 1429–1470, 1665–1704, 1709–1746, 1753–1790, 1808–1846, 1891–1934, 1973–2011, 2036–2073, 2120–2157, 2183–2221, and 2401–2438; these read QLYA…CAHR, QYAQ…TFKF, TNLP…IIQQ, PGVQ…FIEF, LSEK…ILST, STLA…SIGL, FLLL…ETKS, IFLK…STSS, KFLN…VTVS, SLYK…ELCL, PYMS…LTPD, PYIE…RNRK, AFIL…QDHS, DRQV…QLFR, EIAP…LSNT, RKLL…LFHL, NLVS…FLLK, GILL…NVYA, IGAL…SEDV, QFPY…YIFS, EHRG…WNDL, SEAI…TDAN, ENLS…LSNT, DALH…LQIV, DQRR…NSPV, and DFVL…DEIP. The interval 2460 to 3655 is head; it reads TPNVLETILT…QMDQLWQAWL (1196 aa). In terms of domain architecture, FAT spans 2484–3045; it reads LLVYLSKTYG…HFQLRTAYED (562 aa). The segment at 3059–3105 is disordered; sequence RGNSRLRENDSSSDNKSKDLSPSGSFSSVSQFNSKNGSPSSIDSSEK. A compositionally biased stretch (basic and acidic residues) spans 3063 to 3077; the sequence is RLRENDSSSDNKSKD. Residues 3078–3092 show a composition bias toward low complexity; it reads LSPSGSFSSVSQFNS. Positions 3285-3625 constitute a PI3K/PI4K catalytic domain; it reads VPNVDLVRGH…VISHNVPEDL (341 aa). The segment at 3291-3297 is G-loop; sequence VRGHTMC. Residues 3491–3499 form a catalytic loop region; that stretch reads NIGGRSPQK. The interval 3511–3536 is activation loop; that stretch reads SQDLLPSMTSNQPVFHNTEAVPFRLT. The FATC domain occupies 3623–3655; it reads EDLPLNQTLVDLVSQATNPQQLAQMDQLWQAWL.

Belongs to the PI3/PI4-kinase family. TRA1 subfamily. As to quaternary structure, component of the NuA4 acetyltransferase complex. Tra1 is the scaffold subunit for binding to a variety of transcription activators or transcription factors to recruit NuA4 for targeted gene activation. Requires Hsp90 and its co-chaperone, the Triple-T complex (TTT), for its incorporation into NuA4. Interacts with tel2.

Component of the NuA4 histone H4/H2A acetyltransferase involved in transcription and DNA repair. This Schizosaccharomyces pombe (strain 972 / ATCC 24843) (Fission yeast) protein is NuA4 acetyltransferase complex subunit Tra2.